The chain runs to 207 residues: Large ribosomal subunit protein bL25 (207 aa).

Positions 1-20 (MANHQIKAQRRKDEGKGASR) are disordered.

It belongs to the bacterial ribosomal protein bL25 family. CTC subfamily. In terms of assembly, part of the 50S ribosomal subunit; part of the 5S rRNA/L5/L18/L25 subcomplex. Contacts the 5S rRNA. Binds to the 5S rRNA independently of L5 and L18.

This is one of the proteins that binds to the 5S RNA in the ribosome where it forms part of the central protuberance. The sequence is that of Large ribosomal subunit protein bL25 from Xylella fastidiosa (strain M23).